A 60-amino-acid chain; its full sequence is 5-hydroxytryptamine receptor 2B (60 aa).

The Extracellular segment spans residues 1 to 4; sequence VLCP. Residues 5 to 26 form a helical membrane-spanning segment; the sequence is AWLFLDVLFSTASIMHLCAISV. Ergotamine is bound by residues D10 and T15. Residues 27-29 carry the DRY motif; important for ligand-induced conformation changes motif; sequence DRY. Topologically, residues 27–46 are cytoplasmic; sequence DRYIAIKKPIQANQYNSRAT. Residues 47-60 traverse the membrane as a helical segment; it reads AFIKITVVWLISIG.

It belongs to the G-protein coupled receptor 1 family. Interacts (via C-terminus) with MPDZ. As to expression, detected in aorta, renal artery, jugular vein, vena cava and femoral vein.

It localises to the cell membrane. Its subcellular location is the synapse. The protein localises to the synaptosome. Its function is as follows. G-protein coupled receptor for 5-hydroxytryptamine (serotonin). Also functions as a receptor for various ergot alkaloid derivatives and psychoactive substances. Ligand binding causes a conformation change that triggers signaling via guanine nucleotide-binding proteins (G proteins) and modulates the activity of downstream effectors. HTR2B is coupled to G(q)/G(11) G alpha proteins and activates phospholipase C-beta, releasing diacylglycerol (DAG) and inositol 1,4,5-trisphosphate (IP3) second messengers that modulate the activity of phosphatidylinositol 3-kinase and promote the release of Ca(2+) ions from intracellular stores, respectively. Beta-arrestin family members inhibit signaling via G proteins and mediate activation of alternative signaling pathways. Plays a role in the regulation of dopamine and 5-hydroxytryptamine release, 5-hydroxytryptamine uptake and in the regulation of extracellular dopamine and 5-hydroxytryptamine levels, and thereby affects neural activity. May play a role in the perception of pain. Plays a role in the regulation of behavior, including impulsive behavior. Required for normal proliferation of embryonic cardiac myocytes and normal heart development. Protects cardiomyocytes against apoptosis. Plays a role in the adaptation of pulmonary arteries to chronic hypoxia. Plays a role in vasoconstriction. Required for normal osteoblast function and proliferation, and for maintaining normal bone density. Required for normal proliferation of the interstitial cells of Cajal in the intestine. The chain is 5-hydroxytryptamine receptor 2B (HTR2B) from Sus scrofa (Pig).